The sequence spans 304 residues: 2-phospho-L-lactate transferase (304 aa).

D49 lines the 7,8-didemethyl-8-hydroxy-5-deazariboflavin pocket.

This sequence belongs to the CofD family. As to quaternary structure, homodimer. It depends on Mg(2+) as a cofactor.

The catalysed reaction is (2S)-lactyl-2-diphospho-5'-guanosine + 7,8-didemethyl-8-hydroxy-5-deazariboflavin = oxidized coenzyme F420-0 + GMP + H(+). Its pathway is cofactor biosynthesis; coenzyme F420 biosynthesis. Catalyzes the transfer of the 2-phospholactate moiety from (2S)-lactyl-2-diphospho-5'-guanosine to 7,8-didemethyl-8-hydroxy-5-deazariboflavin (FO) with the formation of oxidized coenzyme F420-0 and GMP. The chain is 2-phospho-L-lactate transferase from Methanocorpusculum labreanum (strain ATCC 43576 / DSM 4855 / Z).